The primary structure comprises 179 residues: Large ribosomal subunit protein uL5 (179 aa).

This sequence belongs to the universal ribosomal protein uL5 family. Part of the 50S ribosomal subunit; part of the 5S rRNA/L5/L18/L25 subcomplex. Contacts the 5S rRNA and the P site tRNA. Forms a bridge to the 30S subunit in the 70S ribosome.

Its function is as follows. This is one of the proteins that bind and probably mediate the attachment of the 5S RNA into the large ribosomal subunit, where it forms part of the central protuberance. In the 70S ribosome it contacts protein S13 of the 30S subunit (bridge B1b), connecting the 2 subunits; this bridge is implicated in subunit movement. Contacts the P site tRNA; the 5S rRNA and some of its associated proteins might help stabilize positioning of ribosome-bound tRNAs. The chain is Large ribosomal subunit protein uL5 from Mannheimia succiniciproducens (strain KCTC 0769BP / MBEL55E).